Consider the following 244-residue polypeptide: Ribosomal RNA large subunit methyltransferase E (244 aa).

Residues 1–23 (MATGGKKSAGRTTGSGPAGGSRN) are disordered. Residues Gly91, Trp93, Asp116, Asp132, and Asp156 each contribute to the S-adenosyl-L-methionine site. Lys196 functions as the Proton acceptor in the catalytic mechanism.

Belongs to the class I-like SAM-binding methyltransferase superfamily. RNA methyltransferase RlmE family.

It is found in the cytoplasm. It catalyses the reaction uridine(2552) in 23S rRNA + S-adenosyl-L-methionine = 2'-O-methyluridine(2552) in 23S rRNA + S-adenosyl-L-homocysteine + H(+). Its function is as follows. Specifically methylates the uridine in position 2552 of 23S rRNA at the 2'-O position of the ribose in the fully assembled 50S ribosomal subunit. The sequence is that of Ribosomal RNA large subunit methyltransferase E from Paramagnetospirillum magneticum (strain ATCC 700264 / AMB-1) (Magnetospirillum magneticum).